A 227-amino-acid chain; its full sequence is 2-C-methyl-D-erythritol 4-phosphate cytidylyltransferase (227 aa).

The protein belongs to the IspD/TarI cytidylyltransferase family. IspD subfamily.

The catalysed reaction is 2-C-methyl-D-erythritol 4-phosphate + CTP + H(+) = 4-CDP-2-C-methyl-D-erythritol + diphosphate. The protein operates within isoprenoid biosynthesis; isopentenyl diphosphate biosynthesis via DXP pathway; isopentenyl diphosphate from 1-deoxy-D-xylulose 5-phosphate: step 2/6. Catalyzes the formation of 4-diphosphocytidyl-2-C-methyl-D-erythritol from CTP and 2-C-methyl-D-erythritol 4-phosphate (MEP). This is 2-C-methyl-D-erythritol 4-phosphate cytidylyltransferase from Mycobacterium marinum (strain ATCC BAA-535 / M).